The sequence spans 219 residues: 7-cyano-7-deazaguanine synthase (219 aa).

ATP is bound at residue 10–20 (FSGGQDSTTCL). The Zn(2+) site is built by cysteine 188, cysteine 197, cysteine 200, and cysteine 203.

This sequence belongs to the QueC family. As to quaternary structure, homodimer. The cofactor is Zn(2+).

It carries out the reaction 7-carboxy-7-deazaguanine + NH4(+) + ATP = 7-cyano-7-deazaguanine + ADP + phosphate + H2O + H(+). Its pathway is purine metabolism; 7-cyano-7-deazaguanine biosynthesis. In terms of biological role, catalyzes the ATP-dependent conversion of 7-carboxy-7-deazaguanine (CDG) to 7-cyano-7-deazaguanine (preQ(0)). In Clostridium botulinum (strain Langeland / NCTC 10281 / Type F), this protein is 7-cyano-7-deazaguanine synthase.